The primary structure comprises 255 residues: tRNA (guanine-N(1)-)-methyltransferase (255 aa).

Residues Gly117 and 137-142 contribute to the S-adenosyl-L-methionine site; that span reads LGDFVL.

It belongs to the RNA methyltransferase TrmD family. In terms of assembly, homodimer.

The protein localises to the cytoplasm. It catalyses the reaction guanosine(37) in tRNA + S-adenosyl-L-methionine = N(1)-methylguanosine(37) in tRNA + S-adenosyl-L-homocysteine + H(+). Specifically methylates guanosine-37 in various tRNAs. This chain is tRNA (guanine-N(1)-)-methyltransferase, found in Paracidovorax citrulli (strain AAC00-1) (Acidovorax citrulli).